Here is an 86-residue protein sequence, read N- to C-terminus: Putative defensin-like protein 234 (86 aa).

The first 26 residues, 1–26, serve as a signal peptide directing secretion; sequence MRSATLLLVSCVLLSFILGNVKEVEA. 4 cysteine pairs are disulfide-bonded: C34–C86, C44–C71, C52–C80, and C69–C82.

Belongs to the DEFL family.

Its subcellular location is the secreted. This Arabidopsis thaliana (Mouse-ear cress) protein is Putative defensin-like protein 234 (SCRL14).